The sequence spans 114 residues: Hydrogenase maturation factor HypA (114 aa).

His2 is a binding site for Ni(2+). 4 residues coordinate Zn(2+): Cys70, Cys73, Cys86, and Cys89.

The protein belongs to the HypA/HybF family.

Involved in the maturation of [NiFe] hydrogenases. Required for nickel insertion into the metal center of the hydrogenase. In Crocosphaera subtropica (strain ATCC 51142 / BH68) (Cyanothece sp. (strain ATCC 51142)), this protein is Hydrogenase maturation factor HypA.